A 414-amino-acid chain; its full sequence is Serine hydroxymethyltransferase (414 aa).

(6S)-5,6,7,8-tetrahydrofolate-binding positions include Leu-116 and 120–122; that span reads GHL. Position 224 is an N6-(pyridoxal phosphate)lysine (Lys-224). Residues Glu-240 and 348-350 contribute to the (6S)-5,6,7,8-tetrahydrofolate site; that span reads SPF.

It belongs to the SHMT family. Homodimer. It depends on pyridoxal 5'-phosphate as a cofactor.

It is found in the cytoplasm. It catalyses the reaction (6R)-5,10-methylene-5,6,7,8-tetrahydrofolate + glycine + H2O = (6S)-5,6,7,8-tetrahydrofolate + L-serine. Its pathway is one-carbon metabolism; tetrahydrofolate interconversion. It participates in amino-acid biosynthesis; glycine biosynthesis; glycine from L-serine: step 1/1. Its function is as follows. Catalyzes the reversible interconversion of serine and glycine with tetrahydrofolate (THF) serving as the one-carbon carrier. This reaction serves as the major source of one-carbon groups required for the biosynthesis of purines, thymidylate, methionine, and other important biomolecules. Also exhibits THF-independent aldolase activity toward beta-hydroxyamino acids, producing glycine and aldehydes, via a retro-aldol mechanism. The sequence is that of Serine hydroxymethyltransferase from Campylobacter jejuni (strain RM1221).